The primary structure comprises 304 residues: MKYPRSLSWEKISSSTISIREFNRFENKKKVAIFCGYVRDKYEFNYHDRTYQWLRNNDYYVILVMPKSGILLESDLCKACDVFIERENFGYDFGSYACGLQYVNLIEGSERIDRLLFVNDSFIGPFGYCNLIEDSSEFWGNTDSNQVKYHYQSYLFGFNLEKVNLDIINNFFFSRGDIYTDDKSLVIENFELSLYEYFNGKGLRCSVLHPISVLKSDFIKQTFHFISYPYLTSKIFFYIMVIARDVNPTHQLWLQLFKRGFPFIKKELLRDNPTGYPELYKKVEEVMGSNDFNGEYKQIFKNHL.

Could be involved in the biosynthesis of a major surface antigen important for virulence. This Vibrio anguillarum (strain ATCC 68554 / 775) (Listonella anguillarum) protein is Virulence protein VirA (virA).